Reading from the N-terminus, the 703-residue chain is Elongation factor G 2 (703 aa).

The tr-type G domain maps to 8–291 (ELYRNIGIVA…AVIDYLPAPS (284 aa)). GTP contacts are provided by residues 17 to 24 (AHVDAGKT), 89 to 93 (DTPGH), and 143 to 146 (NKMD).

The protein belongs to the TRAFAC class translation factor GTPase superfamily. Classic translation factor GTPase family. EF-G/EF-2 subfamily.

The protein localises to the cytoplasm. Catalyzes the GTP-dependent ribosomal translocation step during translation elongation. During this step, the ribosome changes from the pre-translocational (PRE) to the post-translocational (POST) state as the newly formed A-site-bound peptidyl-tRNA and P-site-bound deacylated tRNA move to the P and E sites, respectively. Catalyzes the coordinated movement of the two tRNA molecules, the mRNA and conformational changes in the ribosome. The polypeptide is Elongation factor G 2 (fusB) (Pseudomonas putida (strain ATCC 47054 / DSM 6125 / CFBP 8728 / NCIMB 11950 / KT2440)).